The sequence spans 97 residues: Putative septation protein SpoVG (97 aa).

Belongs to the SpoVG family.

Functionally, essential for sporulation. Interferes with or is a negative regulator of the pathway leading to asymmetric septation. This Bacillus licheniformis (strain ATCC 14580 / DSM 13 / JCM 2505 / CCUG 7422 / NBRC 12200 / NCIMB 9375 / NCTC 10341 / NRRL NRS-1264 / Gibson 46) protein is Putative septation protein SpoVG.